The following is a 317-amino-acid chain: Probable GTP 3',8-cyclase (317 aa).

One can recognise a Radical SAM core domain in the interval R4 to R223. Residue R13 coordinates GTP. Residues C20, C24, and C27 each coordinate [4Fe-4S] cluster. Residue K61 participates in GTP binding. G65 is an S-adenosyl-L-methionine binding site. T91 serves as a coordination point for GTP. S115 provides a ligand contact to S-adenosyl-L-methionine. K152 is a GTP binding site. Residues C246 and C249 each contribute to the [4Fe-4S] cluster site. R251–R253 contacts GTP. C263 lines the [4Fe-4S] cluster pocket.

This sequence belongs to the radical SAM superfamily. MoaA family. The cofactor is [4Fe-4S] cluster.

The enzyme catalyses GTP + AH2 + S-adenosyl-L-methionine = (8S)-3',8-cyclo-7,8-dihydroguanosine 5'-triphosphate + 5'-deoxyadenosine + L-methionine + A + H(+). The protein operates within cofactor biosynthesis; molybdopterin biosynthesis. In terms of biological role, catalyzes the cyclization of GTP to (8S)-3',8-cyclo-7,8-dihydroguanosine 5'-triphosphate. The polypeptide is Probable GTP 3',8-cyclase (Metallosphaera sedula (strain ATCC 51363 / DSM 5348 / JCM 9185 / NBRC 15509 / TH2)).